Consider the following 156-residue polypeptide: Small ribosomal subunit protein uS7 (156 aa).

This sequence belongs to the universal ribosomal protein uS7 family. In terms of assembly, part of the 30S ribosomal subunit. Contacts proteins S9 and S11.

In terms of biological role, one of the primary rRNA binding proteins, it binds directly to 16S rRNA where it nucleates assembly of the head domain of the 30S subunit. Is located at the subunit interface close to the decoding center, probably blocks exit of the E-site tRNA. The sequence is that of Small ribosomal subunit protein uS7 from Rhizobium rhizogenes (strain K84 / ATCC BAA-868) (Agrobacterium radiobacter).